The sequence spans 109 residues: MGMKIIAGDDVLVVSGKDKGKMGKVIKVLKKKSCGKDLTFAIVSGINICKKSVKATQNSDGGIISVERPINISNIALVDSVLGIRTKVGYKFIDDKKVRFMKSSGKVIE.

This sequence belongs to the universal ribosomal protein uL24 family. In terms of assembly, part of the 50S ribosomal subunit.

In terms of biological role, one of two assembly initiator proteins, it binds directly to the 5'-end of the 23S rRNA, where it nucleates assembly of the 50S subunit. One of the proteins that surrounds the polypeptide exit tunnel on the outside of the subunit. The protein is Large ribosomal subunit protein uL24 of Ehrlichia ruminantium (strain Gardel).